Reading from the N-terminus, the 449-residue chain is Phosphoglucosamine mutase (449 aa).

Ser99 acts as the Phosphoserine intermediate in catalysis. Residues Ser99, Asp239, Asp241, and Asp243 each contribute to the Mg(2+) site. At Ser99 the chain carries Phosphoserine.

It belongs to the phosphohexose mutase family. The cofactor is Mg(2+). Activated by phosphorylation.

The enzyme catalyses alpha-D-glucosamine 1-phosphate = D-glucosamine 6-phosphate. Its function is as follows. Catalyzes the conversion of glucosamine-6-phosphate to glucosamine-1-phosphate. The polypeptide is Phosphoglucosamine mutase (Finegoldia magna (strain ATCC 29328 / DSM 20472 / WAL 2508) (Peptostreptococcus magnus)).